Here is a 172-residue protein sequence, read N- to C-terminus: UPF0114 protein PMI3225 (172 aa).

4 helical membrane passes run 15-35 (LFAP…IKFF), 57-77 (LLSL…IFSG), 108-128 (KVAA…FMDL), and 136-156 (LLWY…MGYL).

Belongs to the UPF0114 family.

It localises to the cell membrane. The chain is UPF0114 protein PMI3225 from Proteus mirabilis (strain HI4320).